Consider the following 88-residue polypeptide: Histone H2A-beta, sperm (88 aa).

Belongs to the histone H2A family. The nucleosome is a histone octamer containing two molecules each of H2A, H2B, H3 and H4 assembled in one H3-H4 heterotetramer and two H2A-H2B heterodimers. The octamer wraps approximately 147 bp of DNA. Post-translationally, monoubiquitination in C-terminus gives a specific tag for epigenetic transcriptional repression.

Its subcellular location is the nucleus. The protein localises to the chromosome. Core component of nucleosome. Nucleosomes wrap and compact DNA into chromatin, limiting DNA accessibility to the cellular machineries which require DNA as a template. Histones thereby play a central role in transcription regulation, DNA repair, DNA replication and chromosomal stability. DNA accessibility is regulated via a complex set of post-translational modifications of histones, also called histone code, and nucleosome remodeling. The protein is Histone H2A-beta, sperm of Strongylocentrotus purpuratus (Purple sea urchin).